We begin with the raw amino-acid sequence, 239 residues long: Protein NtpR (239 aa).

Residues 12–239 (LIRATDTFQG…GLFDFFVQEF (228 aa)) form the Glutamine amidotransferase type-1 domain. The Nucleophile role is filled by Cys-113. Catalysis depends on residues His-217 and Glu-219.

This Enterococcus hirae (strain ATCC 9790 / DSM 20160 / JCM 8729 / LMG 6399 / NBRC 3181 / NCIMB 6459 / NCDO 1258 / NCTC 12367 / WDCM 00089 / R) protein is Protein NtpR (ntpR).